Consider the following 286-residue polypeptide: Aldo-keto reductase MAV_4483 (286 aa).

Tyr61 serves as the catalytic Proton donor. Positions 201, 203, 239, 241, 242, 247, and 251 each coordinate NADPH.

Belongs to the aldo/keto reductase family.

The polypeptide is Aldo-keto reductase MAV_4483 (Mycobacterium avium (strain 104)).